The chain runs to 825 residues: Zygotic DNA replication licensing factor mcm6-B (825 aa).

A C4-type zinc finger spans residues 159–186; it reads CLDCQTLVRDVEQQFKYTQPSICRNPVC. The 208-residue stretch at 347 to 554 folds into the MCM domain; sequence LYHNLCTSLF…TDYAIARRIV (208 aa). Position 397–404 (397–404) interacts with ATP; it reads GDPSTAKS. Residues 529–532 carry the Arginine finger motif; the sequence is SRFD. Residues 668–679 show a composition bias toward acidic residues; that stretch reads DQEDEHEVEEPQ. Residues 668–690 are disordered; it reads DQEDEHEVEEPQEGINGDADVPN.

The protein belongs to the MCM family. In terms of assembly, component of the mcm2-7 complex (RLF-M). The complex forms a toroidal hexameric ring with the proposed subunit order mcm2-mcm6-mcm4-mcm7-mcm3-mcm5 (By simililarity). Begins to associate with zmcm3, mcm4 and mcm7 into mcm complexes at the neurula stage.

Its subcellular location is the nucleus. The enzyme catalyses ATP + H2O = ADP + phosphate + H(+). Acts as a component of the mcm2-7 complex (mcm complex) which is the putative replicative helicase essential for 'once per cell cycle' DNA replication initiation and elongation in eukaryotic cells. The active ATPase sites in the mcm2-7 ring are formed through the interaction surfaces of two neighboring subunits such that a critical structure of a conserved arginine finger motif is provided in trans relative to the ATP-binding site of the Walker A box of the adjacent subunit. The six ATPase active sites, however, are likely to contribute differentially to the complex helicase activity. The existence of maternal and zygotic forms of mcm3 and mcm6 suggests that specific forms of mcm2-7 complexes may be used during different stages of development. May replace mmcm6 in the mcm2-7 complex. The polypeptide is Zygotic DNA replication licensing factor mcm6-B (zmcm6-b) (Xenopus laevis (African clawed frog)).